Here is a 784-residue protein sequence, read N- to C-terminus: LPS-assembly protein LptD (784 aa).

The signal sequence occupies residues 1–24; that stretch reads MKKRIPTLLATMIATALYSQQGLA. 2 disulfide bridges follow: cysteine 31-cysteine 724 and cysteine 173-cysteine 725.

Belongs to the LptD family. Component of the lipopolysaccharide transport and assembly complex. Interacts with LptE and LptA. Post-translationally, contains two intramolecular disulfide bonds.

The protein localises to the cell outer membrane. Together with LptE, is involved in the assembly of lipopolysaccharide (LPS) at the surface of the outer membrane. The polypeptide is LPS-assembly protein LptD (Escherichia coli O6:K15:H31 (strain 536 / UPEC)).